A 375-amino-acid chain; its full sequence is Neutral protease 2 homolog MGYG_00813 (375 aa).

The first 19 residues, 1–19, serve as a signal peptide directing secretion; sequence MQVIVALAALSSLAAPALG. The propeptide occupies 20 to 190; that stretch reads FSIPRGVPVS…SGPLTRIGKR (171 aa). Cystine bridges form between cysteine 198-cysteine 268 and cysteine 275-cysteine 293. Histidine 318 serves as a coordination point for Zn(2+). Glutamate 319 is an active-site residue. Histidine 322 and aspartate 333 together coordinate Zn(2+).

Belongs to the peptidase M35 family. Zn(2+) is required as a cofactor.

It is found in the secreted. It carries out the reaction Preferential cleavage of bonds with hydrophobic residues in P1'. Also 3-Asn-|-Gln-4 and 8-Gly-|-Ser-9 bonds in insulin B chain.. Secreted metalloproteinase that allows assimilation of proteinaceous substrates. Shows high activities on basic nuclear substrates such as histone and protamine. May be involved in virulence. The polypeptide is Neutral protease 2 homolog MGYG_00813 (Arthroderma gypseum (strain ATCC MYA-4604 / CBS 118893) (Microsporum gypseum)).